The following is a 452-amino-acid chain: Bis(5'-adenosyl)-triphosphatase ENPP4 (452 aa).

The N-terminal stretch at 1–15 (MKLLVILLFSGLITG) is a signal peptide. Residues 16–406 (FRSDSSSSLP…DQWCINLPEA (391 aa)) lie on the Extracellular side of the membrane. 2 residues coordinate Zn(2+): aspartate 34 and threonine 70. Residue threonine 70 is the AMP-threonine intermediate of the active site. The substrate site is built by asparagine 91 and tyrosine 154. N-linked (GlcNAc...) asparagine glycosylation is found at asparagine 155 and asparagine 166. Zn(2+) contacts are provided by aspartate 189, histidine 193, aspartate 237, and histidine 238. Residue aspartate 189 participates in substrate binding. A disulfide bond links cysteine 254 and cysteine 287. Asparagine 276 is a glycosylation site (N-linked (GlcNAc...) asparagine). Histidine 335 is a Zn(2+) binding site. Cysteine 393 and cysteine 400 are joined by a disulfide. The chain crosses the membrane as a helical span at residues 407 to 427 (IAIVIGSLLVLTMLTCLIIIM). Residues 428 to 452 (QNRLSVPRPFSRLQLQEDDDDPLIG) are Cytoplasmic-facing.

This sequence belongs to the nucleotide pyrophosphatase/phosphodiesterase family. The cofactor is Zn(2+).

The protein localises to the cell membrane. It catalyses the reaction P(1),P(3)-bis(5'-adenosyl) triphosphate + H2O = AMP + ADP + 2 H(+). Hydrolyzes extracellular Ap3A into AMP and ADP, and Ap4A into AMP and ATP. Ap3A and Ap4A are diadenosine polyphosphates thought to induce proliferation of vascular smooth muscle cells. Acts as a procoagulant, mediating platelet aggregation at the site of nascent thrombus via release of ADP from Ap3A and activation of ADP receptors. In Pongo abelii (Sumatran orangutan), this protein is Bis(5'-adenosyl)-triphosphatase ENPP4 (ENPP4).